The following is a 340-amino-acid chain: Ferrochelatase (340 aa).

Residues His189 and Glu292 each coordinate Fe cation.

Belongs to the ferrochelatase family.

It is found in the cytoplasm. It catalyses the reaction heme b + 2 H(+) = protoporphyrin IX + Fe(2+). Its pathway is porphyrin-containing compound metabolism; protoheme biosynthesis; protoheme from protoporphyrin-IX: step 1/1. Catalyzes the ferrous insertion into protoporphyrin IX. This Pseudomonas aeruginosa (strain UCBPP-PA14) protein is Ferrochelatase.